The primary structure comprises 226 residues: LysM and putative peptidoglycan-binding domain-containing protein 1 (226 aa).

A phosphoserine mark is found at serine 23 and serine 33. The region spanning 40–84 is the LysM domain; it reads LEHQLEPGDTLAGLALKYGVTMEQIKRTNRLYTNDSIFLKKTLYI. The segment at 95-156 is disordered; that stretch reads NGLDSEEEND…PSHDLSASDF (62 aa). Residues 98-107 show a composition bias toward acidic residues; the sequence is DSEEENDGEE. A Phosphoserine modification is found at serine 99. Positions 142 to 151 are enriched in polar residues; the sequence is QETSTPSHDL. Phosphoserine is present on residues serine 165, serine 180, serine 193, and serine 211. The segment at 170–226 is disordered; sequence AAAQKLRKGESGVPEEDTGLYPSSPRMQQRAVLGPVPLTRTSRTQTLRDQEDEIFKL. Positions 215-226 are enriched in basic and acidic residues; sequence TLRDQEDEIFKL.

The protein is LysM and putative peptidoglycan-binding domain-containing protein 1 (Lysmd1) of Mus musculus (Mouse).